Consider the following 435-residue polypeptide: Nematode resistance protein-like HSPRO2 (435 aa).

As to quaternary structure, interacts with SNF4.

It localises to the cytoplasm. Its function is as follows. Positive regulator of basal resistance. The chain is Nematode resistance protein-like HSPRO2 (HSPRO2) from Arabidopsis thaliana (Mouse-ear cress).